Here is an 878-residue protein sequence, read N- to C-terminus: Phosphoenolpyruvate carboxylase (878 aa).

Active-site residues include His-138 and Lys-545.

The protein belongs to the PEPCase type 1 family. Mg(2+) serves as cofactor.

It carries out the reaction oxaloacetate + phosphate = phosphoenolpyruvate + hydrogencarbonate. Forms oxaloacetate, a four-carbon dicarboxylic acid source for the tricarboxylic acid cycle. In Shewanella loihica (strain ATCC BAA-1088 / PV-4), this protein is Phosphoenolpyruvate carboxylase.